Here is a 66-residue protein sequence, read N- to C-terminus: Regulator of G-protein signaling 6 (66 aa).

One can recognise an RGS domain in the interval 1-66 (LAVQDLKKQP…EDAQEHIYKL (66 aa)).

In terms of assembly, interacts with GNB5. Interacts with RGS7BP, leading to regulate the subcellular location of the heterodimer formed with GNB5. Interacts with GNAI1.

It is found in the cytoplasm. The protein resides in the cytosol. It localises to the membrane. The protein localises to the nucleus. Its subcellular location is the cell membrane. In terms of biological role, regulates G protein-coupled receptor signaling cascades. Inhibits signal transduction by increasing the GTPase activity of G protein alpha subunits, thereby driving them into their inactive GDP-bound form. The RGS6/GNB5 dimer enhances GNAO1 GTPase activity. This is Regulator of G-protein signaling 6 (Rgs6) from Rattus norvegicus (Rat).